The chain runs to 612 residues: Phragmoplastin DRP1D (612 aa).

Residue methionine 1 is modified to N-acetylmethionine. Residues 32–301 enclose the Dynamin-type G domain; the sequence is WEALPSVAVV…LESVIRSRIP (270 aa). The segment at 42–49 is G1 motif; the sequence is GGQSSGKS. 45–50 contacts GTP; sequence SSGKSS. The G2 motif stretch occupies residues 68–70; the sequence is VTR. Residues 143–146 are G3 motif; the sequence is DLPG. The segment at 212–215 is G4 motif; that stretch reads TKLD. GTP-binding positions include 213 to 218 and 243 to 246; these read KLDLMD and NRSQ. The interval 242-245 is G5 motif; it reads VNRS. The 93-residue stretch at 520 to 612 folds into the GED domain; the sequence is FRKIASNVAA…DEIDAAVWVR (93 aa).

This sequence belongs to the TRAFAC class dynamin-like GTPase superfamily. Dynamin/Fzo/YdjA family. In terms of assembly, forms homodimer and may homooligomerize and heterooligomerize to form the phragmoplastin complex. Binds to PHIP1.

The protein resides in the cytoplasm. It is found in the cytoskeleton. The catalysed reaction is GTP + H2O = GDP + phosphate + H(+). In terms of biological role, putative microtubule-associated force-producing protein. Has a GTPase activity. The polypeptide is Phragmoplastin DRP1D (Arabidopsis thaliana (Mouse-ear cress)).